A 166-amino-acid polypeptide reads, in one-letter code: MHRRAIYPGTFDPITNGHADLIERAANLFSEIVVGIAESPSKKPLFSLEERVLLAQQVTENLDNVTVVGFSGLLVNFAKEYEATVLIRGLRAVSDFEYEFQLANMNRRLAPNLESVFLTPAEENSFISSSLVKEVALHGGDVSGFTDARVASALEQKFSGKRPGKS.

Residue threonine 10 coordinates substrate. Residues 10 to 11 (TF) and histidine 18 each bind ATP. The substrate site is built by lysine 42, leucine 74, and arginine 88. ATP-binding positions include 89–91 (GLR), glutamate 99, and 124–130 (NSFISSS).

It belongs to the bacterial CoaD family. Homohexamer. Requires Mg(2+) as cofactor.

The protein localises to the cytoplasm. The enzyme catalyses (R)-4'-phosphopantetheine + ATP + H(+) = 3'-dephospho-CoA + diphosphate. The protein operates within cofactor biosynthesis; coenzyme A biosynthesis; CoA from (R)-pantothenate: step 4/5. Functionally, reversibly transfers an adenylyl group from ATP to 4'-phosphopantetheine, yielding dephospho-CoA (dPCoA) and pyrophosphate. In Idiomarina loihiensis (strain ATCC BAA-735 / DSM 15497 / L2-TR), this protein is Phosphopantetheine adenylyltransferase.